The following is a 459-amino-acid chain: ATP-binding protein Uup-like (459 aa).

Positions 132–350 (FEMEDVSYEI…QQANFWASKA (219 aa)) constitute an ABC transporter domain. 164–171 (GPNGCGKT) lines the ATP pocket. The segment covering 357 to 375 (AKKSEPLKEESAVKNDRTS) has biased composition (basic and acidic residues). The segment at 357 to 381 (AKKSEPLKEESAVKNDRTSKPKSVK) is disordered.

The protein belongs to the ABC transporter superfamily. ABCF family. Uup subfamily.

It is found in the cytoplasm. It carries out the reaction ATP + H2O = ADP + phosphate + H(+). Functionally, might play a role in ribosome assembly or function; this is missing the first ABC transporter domain compared to paralogs. The protein is ATP-binding protein Uup-like (uup-B) of Haemophilus influenzae (strain ATCC 51907 / DSM 11121 / KW20 / Rd).